The chain runs to 120 residues: MSYRKLGRTSAQRKALLRDLATDLIINERIETTEARAKELRSVVEKMITLGKRGDLHARRQAAAFIRKEVANSETGQDALQKLFSDIAPRYQDRQGGYTRIMKLGPRRGDGAPMVIIELV.

It belongs to the bacterial ribosomal protein bL17 family. As to quaternary structure, part of the 50S ribosomal subunit. Contacts protein L32.

This chain is Large ribosomal subunit protein bL17, found in Geobacillus sp. (strain WCH70).